A 100-amino-acid polypeptide reads, in one-letter code: MASVNIKPLEDKILVQANEAETTTASGLVIPDTAKEKPQEGTVVAVGPGRWDEDGEKRIPLDVSEGDVVIYSKYGGTEIKYNGEEYLILSARDVLAVVSK.

This sequence belongs to the GroES chaperonin family. Heptamer of 7 subunits arranged in a ring. Interacts with the chaperonin GroEL.

The protein resides in the cytoplasm. In terms of biological role, together with the chaperonin GroEL, plays an essential role in assisting protein folding. The GroEL-GroES system forms a nano-cage that allows encapsulation of the non-native substrate proteins and provides a physical environment optimized to promote and accelerate protein folding. GroES binds to the apical surface of the GroEL ring, thereby capping the opening of the GroEL channel. This chain is Co-chaperonin GroES, found in Mycolicibacterium vanbaalenii (strain DSM 7251 / JCM 13017 / BCRC 16820 / KCTC 9966 / NRRL B-24157 / PYR-1) (Mycobacterium vanbaalenii).